Consider the following 500-residue polypeptide: Glycerol kinase (500 aa).

Thr12 is a binding site for ADP. ATP-binding residues include Thr12, Thr13, and Ser14. Residue Thr12 coordinates sn-glycerol 3-phosphate. Position 16 (Arg16) interacts with ADP. Residues Arg82, Glu83, Tyr135, and Asp245 each coordinate sn-glycerol 3-phosphate. Positions 82, 83, 135, 245, and 246 each coordinate glycerol. ADP contacts are provided by Thr267 and Gly310. ATP-binding residues include Thr267, Gly310, Gln314, and Gly411. ADP contacts are provided by Gly411 and Asn415.

This sequence belongs to the FGGY kinase family. Homotetramer and homodimer (in equilibrium).

The catalysed reaction is glycerol + ATP = sn-glycerol 3-phosphate + ADP + H(+). The protein operates within polyol metabolism; glycerol degradation via glycerol kinase pathway; sn-glycerol 3-phosphate from glycerol: step 1/1. Its activity is regulated as follows. Activated by phosphorylation and inhibited by fructose 1,6-bisphosphate (FBP). Key enzyme in the regulation of glycerol uptake and metabolism. Catalyzes the phosphorylation of glycerol to yield sn-glycerol 3-phosphate. The sequence is that of Glycerol kinase from Clostridium perfringens (strain ATCC 13124 / DSM 756 / JCM 1290 / NCIMB 6125 / NCTC 8237 / Type A).